We begin with the raw amino-acid sequence, 369 residues long: MKRHYEAVVIGGGIIGSAIAYYLAKENKNTALFESGTMGGRTTSAAAGMLGAHAECEERDAFFDFAMHSQRLYKGLGEELYALSGVDIRQHNGGMFKLAFSEEDVLQLRQMDDLDSVSWYSKEEVLEKEPYASGDIFGASFIQDDVHVEPYFVCKAYVKAAKMLGAEIFEHTPVLHVERDGEALFIKTPSGDVWANHVVVASGVWSGMFFKQLGLNNAFLPVKGECLSVWNDDIPLTKTLYHDHCYIVPRKSGRLVVGATMKPGDWSETPDLGGLESVMKKAKTMLPAIQNMKVDRFWAGLRPGTKDGKPYIGRHPEDSRILFAAGHFRNGILLAPATGALISDLIMNKEVNQDWLHAFRIDRKEAVQI.

FAD is bound by residues 14–15, 34–35, 42–43, 47–49, and V174; these read II, ES, TT, and AGM. 2 residues coordinate substrate: R302 and R329. 327–333 is an FAD binding site; the sequence is HFRNGIL.

It belongs to the DAO family. ThiO subfamily. Homotetramer. Requires FAD as cofactor.

It localises to the cytoplasm. The enzyme catalyses glycine + O2 + H2O = glyoxylate + H2O2 + NH4(+). It carries out the reaction N-ethylglycine + O2 + H2O = ethylamine + glyoxylate + H2O2. The catalysed reaction is sarcosine + O2 + H2O = methylamine + glyoxylate + H2O2. It catalyses the reaction D-alanine + O2 + H2O = pyruvate + H2O2 + NH4(+). The enzyme catalyses glyphosate + O2 + H2O = aminomethylphosphonate + glyoxylate + H2O2 + H(+). It participates in cofactor biosynthesis; thiamine diphosphate biosynthesis. Its activity is regulated as follows. Is competitively inhibited by glycolate. Its function is as follows. Catalyzes the FAD-dependent oxidative deamination of various amines and D-amino acids to yield the corresponding alpha-keto acids, ammonia/amine, and hydrogen peroxide. Oxidizes sarcosine (N-methylglycine), N-ethylglycine and glycine. Can also oxidize the herbicide glyphosate (N-phosphonomethylglycine). Displays lower activities on D-alanine, D-valine, D-proline and D-methionine. Does not act on L-amino acids and other D-amino acids. Is essential for thiamine biosynthesis since the oxidation of glycine catalyzed by ThiO generates the glycine imine intermediate (dehydroglycine) required for the biosynthesis of the thiazole ring of thiamine pyrophosphate. The protein is Glycine oxidase of Bacillus subtilis (strain 168).